The primary structure comprises 587 residues: Heavy metal-associated isoprenylated plant protein 33 (587 aa).

One can recognise an HMA domain in the interval 9–72 (IQTCVLKVNI…KLLKSGKHAE (64 aa)). Residues cysteine 20 and cysteine 23 each coordinate a metal cation. 5 disordered regions span residues 98–146 (QIDH…MVIP), 176–261 (LKLP…KPMM), 287–449 (AHKN…PMSN), 462–504 (PGGG…QQQQ), and 532–587 (YARP…CNIM). 2 stretches are compositionally biased toward gly residues: residues 104 to 113 (KGGGGGGGGP) and 121 to 140 (KIGGGGGGGGGGGGGGGGGP). Over residues 194-208 (PMNKNPQMPNNPNQK) the composition is skewed to low complexity. Acidic residues predominate over residues 215–248 (PDDDDEEDFSDEFDDEFDEDDDEFDDDLEDDEFD). Composition is skewed to gly residues over residues 290–300 (NGGGPGPAGGK), 312–419 (MGGG…GGGP), and 428–445 (GAMGGPMGSLPQMGGGPG). The span at 471–483 (SAEAPPGYFQGQV) shows a compositional bias: low complexity. 2 stretches are compositionally biased toward pro residues: residues 534–547 (RPPPAVNYMPPQPQ) and 554–565 (YPYPYPYPPQYP). A compositionally biased stretch (polar residues) spans 578-587 (DENTSSCNIM). A Cysteine methyl ester modification is found at cysteine 584. Cysteine 584 is lipidated: S-farnesyl cysteine. The propeptide at 585–587 (NIM) is removed in mature form.

Belongs to the HIPP family.

In terms of biological role, heavy-metal-binding protein. This is Heavy metal-associated isoprenylated plant protein 33 from Arabidopsis thaliana (Mouse-ear cress).